The following is a 314-amino-acid chain: 2-oxo-3-(phosphooxy)propyl 3-oxoalkanoate synthase (314 aa).

The protein belongs to the AfsA family.

The enzyme catalyses a medium-chain 3-oxoacyl-[ACP] + dihydroxyacetone phosphate = a (4-alkanoyl-5-oxo-2,5-dihydrofuran-3-yl)methyl phosphate + holo-[ACP] + H2O. Its function is as follows. Involved of the biosynthesis of S.coelicolor butanolide 1 (SCB1), a gamma-butyrolactone that triggers antibiotic production. In Streptomyces coelicolor (strain ATCC BAA-471 / A3(2) / M145), this protein is 2-oxo-3-(phosphooxy)propyl 3-oxoalkanoate synthase.